An 839-amino-acid chain; its full sequence is Elongation factor 2 (839 aa).

The tr-type G domain occupies 17-248 (ENIRNMSVIA…MGRLWGDSYF (232 aa)). GTP contacts are provided by residues 26-33 (AHVDHGKT), 156-159 (NKVD), and 211-213 (SGL). At histidine 698 the chain carries Diphthamide.

Belongs to the TRAFAC class translation factor GTPase superfamily. Classic translation factor GTPase family. EF-G/EF-2 subfamily. In terms of processing, phosphorylation by EF-2 kinase completely inactivates EF-2.

Its subcellular location is the cytoplasm. It catalyses the reaction GTP + H2O = GDP + phosphate + H(+). Functionally, catalyzes the GTP-dependent ribosomal translocation step during translation elongation. During this step, the ribosome changes from the pre-translocational (PRE) to the post-translocational (POST) state as the newly formed A-site-bound peptidyl-tRNA and P-site-bound deacylated tRNA move to the P and E sites, respectively. Catalyzes the coordinated movement of the two tRNA molecules, the mRNA and conformational changes in the ribosome. The chain is Elongation factor 2 (efbA) from Dictyostelium discoideum (Social amoeba).